The chain runs to 215 residues: Ribosomal RNA small subunit methyltransferase G (215 aa).

Residues G77, F82, 130–131 (IE), and R146 contribute to the S-adenosyl-L-methionine site.

Belongs to the methyltransferase superfamily. RNA methyltransferase RsmG family.

It localises to the cytoplasm. The enzyme catalyses guanosine(527) in 16S rRNA + S-adenosyl-L-methionine = N(7)-methylguanosine(527) in 16S rRNA + S-adenosyl-L-homocysteine. In terms of biological role, specifically methylates the N7 position of guanine in position 527 of 16S rRNA. The polypeptide is Ribosomal RNA small subunit methyltransferase G (Bartonella quintana (strain Toulouse) (Rochalimaea quintana)).